The following is a 250-amino-acid chain: MAILGLQGVRGGVGTTSLTAALAWALQILGENVLVIDASPDNLLRMSFNVDFVHQGGWARSLLDGQDWRDAGLRYTSQLDLLPFGQLTAQERENPQSWQETLGEIGSAIQALKASGRYSWILLDLPYGASPLTRQLVSLCDHTLAIARVDANCHIRLHQQALPAGAHILINDLRIGSQLQDDLYQVWLQSQRRLLPIVIHRDEAMAECMASKQPLGEYRSDSLAAEEVLTLANWCLLHDAGDKTSAGSLR.

9 to 16 contacts ATP; it reads VRGGVGTT.

This sequence belongs to the BcsQ family.

The protein resides in the cytoplasm. Essential for cellulose biosynthesis. May play a role in subcellular localization of an active cellulose biosynthesis apparatus at the bacterial cell pole. The protein is Cellulose biosynthesis protein BcsQ (bcsQ) of Salmonella typhimurium (strain LT2 / SGSC1412 / ATCC 700720).